The following is a 145-amino-acid chain: Large-conductance mechanosensitive channel (145 aa).

3 helical membrane-spanning segments follow: residues 14–34 (VMDL…VKSL), 38–58 (LIMP…YFLP), and 81–101 (GSFL…FLMV).

This sequence belongs to the MscL family. Homopentamer.

Its subcellular location is the cell inner membrane. In terms of biological role, channel that opens in response to stretch forces in the membrane lipid bilayer. May participate in the regulation of osmotic pressure changes within the cell. The sequence is that of Large-conductance mechanosensitive channel from Rhizobium etli (strain CIAT 652).